The chain runs to 275 residues: MHLQTRAAVVTGAASGIGLALSARFARAGAGVVMADVDGDALHRRAAELTARGAQVTAVTADLTDPEVVERLADTAFDQLGDIDVVCNNAGVLGPVGQPLWEVPLERMRQVFEVNHWAHVLVARAFVPRLLERGRPAHLIHTASMSAFVVGAGSAAYAASKHADLAVARSLRADLRGTGVRVSVLCPGRVDTPMVQGLTAPRGAGGDTSVSAEDVAGLVWEALGSDRFYLFSNSDARIRLRDQFDDVWRHVSLPPPSPEEELWPAPKATTVTMNH.

12 to 36 contacts NAD(+); it reads GAASGIGLALSARFARAGAGVVMAD. Serine 144 serves as a coordination point for substrate. Tyrosine 157 functions as the Proton acceptor in the catalytic mechanism. Lysine 161 contributes to the NAD(+) binding site.

This sequence belongs to the short-chain dehydrogenases/reductases (SDR) family.

The enzyme catalyses 1-deoxy-11beta-hydroxypentalenate + NAD(+) = 1-deoxy-11-oxopentalenate + NADH + H(+). It participates in antibiotic biosynthesis; pentalenolactone biosynthesis. Functionally, catalyzes the oxidation of 1-deoxy-11-beta-hydroxypentalenic acid to 1-deoxy-11-oxopentalenic acid in the biosynthesis of pentalenolactone antibiotic. The chain is 1-deoxy-11-beta-hydroxypentalenate dehydrogenase (penF) from Streptomyces exfoliatus (Streptomyces hydrogenans).